Here is a 156-residue protein sequence, read N- to C-terminus: Putative pre-16S rRNA nuclease (156 aa).

The protein belongs to the YqgF nuclease family.

The protein localises to the cytoplasm. Could be a nuclease involved in processing of the 5'-end of pre-16S rRNA. The chain is Putative pre-16S rRNA nuclease from Bartonella tribocorum (strain CIP 105476 / IBS 506).